We begin with the raw amino-acid sequence, 190 residues long: Prostaglandin-H2 D-isomerase (190 aa).

The first 22 residues, 1–22 (MATHHTLWMGLVLLGLLGGLQA), serve as a signal peptide directing secretion. An N-linked (GlcNAc...) asparagine glycan is attached at N51. C65 acts as the Nucleophile in catalysis. N78 is a glycosylation site (N-linked (GlcNAc...) asparagine). A disulfide bridge links C89 with C186.

Belongs to the calycin superfamily. Lipocalin family. As to quaternary structure, monomer.

The protein localises to the rough endoplasmic reticulum. The protein resides in the nucleus membrane. It is found in the golgi apparatus. It localises to the cytoplasm. Its subcellular location is the perinuclear region. The protein localises to the secreted. It carries out the reaction prostaglandin H2 = prostaglandin D2. Functionally, catalyzes the conversion of PGH2 to PGD2, a prostaglandin involved in smooth muscle contraction/relaxation and a potent inhibitor of platelet aggregation. Involved in a variety of CNS functions, such as sedation, NREM sleep and PGE2-induced allodynia, and may have an anti-apoptotic role in oligodendrocytes. Binds small non-substrate lipophilic molecules, including biliverdin, bilirubin, retinal, retinoic acid and thyroid hormone, and may act as a scavenger for harmful hydrophobic molecules and as a secretory retinoid and thyroid hormone transporter. Possibly involved in development and maintenance of the blood-brain, blood-retina, blood-aqueous humor and blood-testis barrier. It is likely to play important roles in both maturation and maintenance of the central nervous system and male reproductive system. Involved in PLA2G3-dependent maturation of mast cells. PLA2G3 is secreted by immature mast cells and acts on nearby fibroblasts upstream to PTDGS to synthesize PGD2, which in turn promotes mast cell maturation and degranulation via PTGDR. The chain is Prostaglandin-H2 D-isomerase (PTGDS) from Macaca fuscata fuscata (Japanese macaque).